The following is a 320-amino-acid chain: Ferrochelatase (320 aa).

Residues histidine 194 and glutamate 275 each coordinate Fe cation.

This sequence belongs to the ferrochelatase family. Monomer.

It localises to the cytoplasm. It carries out the reaction heme b + 2 H(+) = protoporphyrin IX + Fe(2+). The protein operates within porphyrin-containing compound metabolism; protoheme biosynthesis; protoheme from protoporphyrin-IX: step 1/1. Functionally, catalyzes the ferrous insertion into protoporphyrin IX. The chain is Ferrochelatase from Escherichia coli (strain 55989 / EAEC).